The chain runs to 233 residues: Leucyl/phenylalanyl-tRNA--protein transferase (233 aa).

It belongs to the L/F-transferase family.

It localises to the cytoplasm. It catalyses the reaction N-terminal L-lysyl-[protein] + L-leucyl-tRNA(Leu) = N-terminal L-leucyl-L-lysyl-[protein] + tRNA(Leu) + H(+). The catalysed reaction is N-terminal L-arginyl-[protein] + L-leucyl-tRNA(Leu) = N-terminal L-leucyl-L-arginyl-[protein] + tRNA(Leu) + H(+). It carries out the reaction L-phenylalanyl-tRNA(Phe) + an N-terminal L-alpha-aminoacyl-[protein] = an N-terminal L-phenylalanyl-L-alpha-aminoacyl-[protein] + tRNA(Phe). Its function is as follows. Functions in the N-end rule pathway of protein degradation where it conjugates Leu, Phe and, less efficiently, Met from aminoacyl-tRNAs to the N-termini of proteins containing an N-terminal arginine or lysine. The sequence is that of Leucyl/phenylalanyl-tRNA--protein transferase from Klebsiella pneumoniae subsp. pneumoniae (strain ATCC 700721 / MGH 78578).